Here is a 70-residue protein sequence, read N- to C-terminus: DNA-directed RNA polymerase subunit omega (70 aa).

This sequence belongs to the RNA polymerase subunit omega family. The RNAP catalytic core consists of 2 alpha, 1 beta, 1 beta' and 1 omega subunit. When a sigma factor is associated with the core the holoenzyme is formed, which can initiate transcription.

It carries out the reaction RNA(n) + a ribonucleoside 5'-triphosphate = RNA(n+1) + diphosphate. Promotes RNA polymerase assembly. Latches the N- and C-terminal regions of the beta' subunit thereby facilitating its interaction with the beta and alpha subunits. The protein is DNA-directed RNA polymerase subunit omega of Bacillus cereus (strain B4264).